The sequence spans 515 residues: Protein FAM98A (515 aa).

Disordered regions lie at residues 297–411 (VLMG…YHGG) and 432–515 (SGYQ…HYTS). Residues 302 to 311 (VPDRGGRPNE) show a composition bias toward basic and acidic residues. Residues 382-395 (WTDGGSASGGGYQD) are compositionally biased toward gly residues. Positions 444–456 (RYQDGGHHGERGS) are enriched in basic and acidic residues. Gly residues predominate over residues 457–481 (GRGGRGGRGGRGGRGSQGGGWGGRG). Low complexity predominate over residues 485 to 501 (YHQGGQFEQHFQHGGYQ). The segment covering 502-515 (YSHSGFGQGRHYTS) has biased composition (polar residues).

This sequence belongs to the FAM98 family. As to quaternary structure, interacts (via N- and C-terminus) with DDX1. Interacts (via N- and C-terminus) with C14orf166. Interacts with FAM98B. Interacts with PLEKHM1 (via N- and C-terminus).

Its function is as follows. Positively stimulates PRMT1-induced protein arginine methylation. Involved in skeletal homeostasis. Positively regulates lysosome peripheral distribution and ruffled border formation in osteoclasts. This is Protein FAM98A from Rattus norvegicus (Rat).